A 195-amino-acid polypeptide reads, in one-letter code: MSLVPIVVEQTNRGERSYDIFSRLLKDRIVFLGEEINDTTASLVIAQLLFLEAEDPDKDIWLYINSPGGSITAGFAIYDTMQYIKPDVVTLCVGMAASMAAFLLAAGAKGKRFALPNSEIMIHQPLGGMQGQATDIKIHAERILKLRDKLDKILAENTGQPIEKIKADTERDFFMDAEDAKAYGIIDEVLIRNKR.

Catalysis depends on S98, which acts as the Nucleophile. H123 is a catalytic residue.

Belongs to the peptidase S14 family. In terms of assembly, fourteen ClpP subunits assemble into 2 heptameric rings which stack back to back to give a disk-like structure with a central cavity, resembling the structure of eukaryotic proteasomes.

It is found in the cytoplasm. The enzyme catalyses Hydrolysis of proteins to small peptides in the presence of ATP and magnesium. alpha-casein is the usual test substrate. In the absence of ATP, only oligopeptides shorter than five residues are hydrolyzed (such as succinyl-Leu-Tyr-|-NHMec, and Leu-Tyr-Leu-|-Tyr-Trp, in which cleavage of the -Tyr-|-Leu- and -Tyr-|-Trp bonds also occurs).. Functionally, cleaves peptides in various proteins in a process that requires ATP hydrolysis. Has a chymotrypsin-like activity. Plays a major role in the degradation of misfolded proteins. The polypeptide is ATP-dependent Clp protease proteolytic subunit (Thermoanaerobacter pseudethanolicus (strain ATCC 33223 / 39E) (Clostridium thermohydrosulfuricum)).